We begin with the raw amino-acid sequence, 348 residues long: ECA polysaccharide chain length modulation protein (348 aa).

2 consecutive transmembrane segments (helical) span residues 31–51 and 323–343; these read FWII…TFFA and AFLM…VALT.

Belongs to the WzzB/Cld/Rol family. Probably part of a complex composed of WzxE, WzyE and WzzE.

Its subcellular location is the cell inner membrane. Its pathway is bacterial outer membrane biogenesis; enterobacterial common antigen biosynthesis. Modulates the polysaccharide chain length of enterobacterial common antigen (ECA). The sequence is that of ECA polysaccharide chain length modulation protein from Salmonella typhimurium (strain LT2 / SGSC1412 / ATCC 700720).